A 275-amino-acid chain; its full sequence is Transmembrane protein 202 (275 aa).

A run of 4 helical transmembrane segments spans residues 60–80 (SGFS…QFLV), 116–136 (ALFL…LSSC), 151–171 (VSML…LFLA), and 193–213 (WCSE…FITF).

It is found in the membrane. This chain is Transmembrane protein 202 (Tmem202), found in Mus musculus (Mouse).